Here is a 696-residue protein sequence, read N- to C-terminus: MWLQVTNCSTLHSSLSYCGANTLSDMAKNLILWLVIAVVLMSVFQSFGPSDSAGRQVDYTTFVREIGQDQIREARFNEREITVFKRDNTRYVTYLPVFNDQKLLDDLINANVKVLGTPPEEPSLLASIFISWFPMLLLIGVWVFFMRQMQGGGGGKGAMSFGKSKARMMSEDQIKTTFADVAGCDEAKEDVKELVDYLRDPSRFQKLGGKIPTGILLVGPPGTGKTLLAKAIAGEAKVPFFTISGSDFVEMFVGVGASRVRDMFEQAKKAAPCIIFIDEIDAVGRQRGAGVGGGHDEREQTLNQMLVEMDGFEGNEGVIVIAATNRPDVLDPALLRPGRFDRQVVVGLPDVRGREQILKVHMRKVPLEGDVEPSLIARGTPGFSGADLANLVNEAALFAARGNKRVVSMQEFELAKDKIMMGAERKSMVMSEDQKESTAYHEAGHAIIGRLVPDHDPVYKVSIIPRGRALGVTMYLPEKDRISHSREFLESMLSSLYGGRLAEELIYGVDKVSTGASNDIERATDIARKMVTQWGFSEKMGPVLYADDEGEVFLGRSVTQTKHMSDDTARAIDMEIRALIDRNYERAREILAQNMDIMHAMKDALMKYETIDAAQIDDLMARKSEIRAPKGWGDTDDVMKSSPTTSESAPEAKTESAPEAKAEANVETEEKPVAADSEELKPKAEQAPKEDDKPQA.

The Cytoplasmic segment spans residues 1–29; it reads MWLQVTNCSTLHSSLSYCGANTLSDMAKN. Residues 30–50 form a helical membrane-spanning segment; that stretch reads LILWLVIAVVLMSVFQSFGPS. Over 51–124 the chain is Periplasmic; the sequence is DSAGRQVDYT…LGTPPEEPSL (74 aa). A helical transmembrane segment spans residues 125–145; the sequence is LASIFISWFPMLLLIGVWVFF. At 146–696 the chain is on the cytoplasmic side; sequence MRQMQGGGGG…APKEDDKPQA (551 aa). 219–226 contacts ATP; it reads GPPGTGKT. H441 provides a ligand contact to Zn(2+). E442 is an active-site residue. Zn(2+)-binding residues include H445 and D519. The segment at 627–696 is disordered; that stretch reads RAPKGWGDTD…APKEDDKPQA (70 aa). Residues 650-696 show a composition bias toward basic and acidic residues; sequence PEAKTESAPEAKAEANVETEEKPVAADSEELKPKAEQAPKEDDKPQA.

This sequence in the central section; belongs to the AAA ATPase family. The protein in the C-terminal section; belongs to the peptidase M41 family. As to quaternary structure, homohexamer. The cofactor is Zn(2+).

It localises to the cell inner membrane. In terms of biological role, acts as a processive, ATP-dependent zinc metallopeptidase for both cytoplasmic and membrane proteins. Plays a role in the quality control of integral membrane proteins. This chain is ATP-dependent zinc metalloprotease FtsH, found in Photobacterium profundum (strain SS9).